A 368-amino-acid polypeptide reads, in one-letter code: Histidinol-phosphate aminotransferase (368 aa).

N6-(pyridoxal phosphate)lysine is present on Lys229.

Belongs to the class-II pyridoxal-phosphate-dependent aminotransferase family. Histidinol-phosphate aminotransferase subfamily. Homodimer. It depends on pyridoxal 5'-phosphate as a cofactor.

It carries out the reaction L-histidinol phosphate + 2-oxoglutarate = 3-(imidazol-4-yl)-2-oxopropyl phosphate + L-glutamate. It functions in the pathway amino-acid biosynthesis; L-histidine biosynthesis; L-histidine from 5-phospho-alpha-D-ribose 1-diphosphate: step 7/9. This Acidovorax ebreus (strain TPSY) (Diaphorobacter sp. (strain TPSY)) protein is Histidinol-phosphate aminotransferase.